The following is a 228-amino-acid chain: HTH-type transcriptional repressor RspR (228 aa).

The HTH gntR-type domain maps to 11-78 (QPVNQQIYRI…PQRGSYVNKI (68 aa)). Residues 38-57 (EKEVSVRFNVSRQPVREAFI) constitute a DNA-binding region (H-T-H motif).

Functionally, repressor of the rspAB operon. Acts by binding directly to the upstream region of rspA. This Escherichia coli (strain K12) protein is HTH-type transcriptional repressor RspR (rspR).